Reading from the N-terminus, the 334-residue chain is Phosphate acyltransferase (334 aa).

The protein belongs to the PlsX family. In terms of assembly, homodimer. Probably interacts with PlsY.

It localises to the cytoplasm. The enzyme catalyses a fatty acyl-[ACP] + phosphate = an acyl phosphate + holo-[ACP]. Its pathway is lipid metabolism; phospholipid metabolism. Catalyzes the reversible formation of acyl-phosphate (acyl-PO(4)) from acyl-[acyl-carrier-protein] (acyl-ACP). This enzyme utilizes acyl-ACP as fatty acyl donor, but not acyl-CoA. This Clostridium tetani (strain Massachusetts / E88) protein is Phosphate acyltransferase.